We begin with the raw amino-acid sequence, 267 residues long: Glucosamine-6-phosphate deaminase (267 aa).

Asp72 functions as the Proton acceptor; for enolization step in the catalytic mechanism. Asp141 acts as the For ring-opening step in catalysis. Catalysis depends on His143, which acts as the Proton acceptor; for ring-opening step. The active-site For ring-opening step is the Glu148.

The protein belongs to the glucosamine/galactosamine-6-phosphate isomerase family. NagB subfamily. In terms of assembly, homohexamer.

It catalyses the reaction alpha-D-glucosamine 6-phosphate + H2O = beta-D-fructose 6-phosphate + NH4(+). The protein operates within amino-sugar metabolism; N-acetylneuraminate degradation; D-fructose 6-phosphate from N-acetylneuraminate: step 5/5. Its activity is regulated as follows. Allosterically activated by N-acetylglucosamine 6-phosphate (GlcNAc6P). Its function is as follows. Catalyzes the reversible isomerization-deamination of glucosamine 6-phosphate (GlcN6P) to form fructose 6-phosphate (Fru6P) and ammonium ion. This chain is Glucosamine-6-phosphate deaminase, found in Actinobacillus pleuropneumoniae serotype 3 (strain JL03).